The primary structure comprises 156 residues: Small ribosomal subunit protein uS7c (156 aa).

This sequence belongs to the universal ribosomal protein uS7 family. Part of the 30S ribosomal subunit.

It is found in the plastid. The protein resides in the chloroplast. Functionally, one of the primary rRNA binding proteins, it binds directly to 16S rRNA where it nucleates assembly of the head domain of the 30S subunit. The polypeptide is Small ribosomal subunit protein uS7c (rps7) (Thalassiosira pseudonana (Marine diatom)).